We begin with the raw amino-acid sequence, 370 residues long: Actin-related protein 2/3 complex subunit 1A (370 aa).

WD repeat units lie at residues Phe-6 to Ala-45, Glu-50 to Thr-89, Pro-140 to Lys-179, Gly-202 to Thr-241, Thr-244 to Ser-284, and Leu-322 to Gln-365.

Belongs to the WD repeat ARPC1 family. In terms of assembly, probable component of the Arp2/3 complex in which it may replace ARPC1B.

Its subcellular location is the cytoplasm. It localises to the cytoskeleton. It is found in the nucleus. Probably functions as a component of the Arp2/3 complex which is involved in regulation of actin polymerization and together with an activating nucleation-promoting factor (NPF) mediates the formation of branched actin networks. In addition to its role in the cytoplasmic cytoskeleton, the Arp2/3 complex also promotes actin polymerization in the nucleus, thereby regulating gene transcription and repair of damaged DNA. This is Actin-related protein 2/3 complex subunit 1A (Arpc1a) from Mus musculus (Mouse).